Reading from the N-terminus, the 247-residue chain is 3,4-dihydroxy-2-butanone 4-phosphate synthase (247 aa).

Residues 38 to 39 (RE), Asp-43, 179 to 183 (RMGQT), and Glu-203 contribute to the D-ribulose 5-phosphate site. Glu-39 contacts Mg(2+).

This sequence belongs to the DHBP synthase family. As to quaternary structure, homodimer. The cofactor is Mg(2+). Mn(2+) is required as a cofactor.

The catalysed reaction is D-ribulose 5-phosphate = (2S)-2-hydroxy-3-oxobutyl phosphate + formate + H(+). It functions in the pathway cofactor biosynthesis; riboflavin biosynthesis; 2-hydroxy-3-oxobutyl phosphate from D-ribulose 5-phosphate: step 1/1. Functionally, catalyzes the conversion of D-ribulose 5-phosphate to formate and 3,4-dihydroxy-2-butanone 4-phosphate. The chain is 3,4-dihydroxy-2-butanone 4-phosphate synthase from Methanosarcina acetivorans (strain ATCC 35395 / DSM 2834 / JCM 12185 / C2A).